A 92-amino-acid polypeptide reads, in one-letter code: Large ribosomal subunit protein eL37 (92 aa).

Cysteine 19, cysteine 22, cysteine 34, and cysteine 37 together coordinate Zn(2+). The C4-type zinc-finger motif lies at 19 to 37 (CRRCGRRSYHIQKSTCANC). Residues 50–92 (SEKAKRRKTTGSGRTAHLRDVHRRFKNGFQVGTPKGARGPENH) form a disordered region.

Belongs to the eukaryotic ribosomal protein eL37 family. It depends on Zn(2+) as a cofactor.

Binds to the 23S rRNA. This Emericella nidulans (strain FGSC A4 / ATCC 38163 / CBS 112.46 / NRRL 194 / M139) (Aspergillus nidulans) protein is Large ribosomal subunit protein eL37 (rpl37).